Reading from the N-terminus, the 357-residue chain is MKVLAALALSALAMAKPTPPMPGMSLVQTGPQETRWVTAKEKHDMVMNHIGFFDITNRPESASIASKPKSYAFPGNVSHQAEVKPLLEKISADHIKSNLEMFSSYPNRYYDAQSGVESAQWVMEQAQAVVGNIQGAKVEMVKHDWMQPSIRAIIPGKSEKIVAVGAHQDSINGKNPQGEAPGADDNGSGSMTILEALTALVSDQKIAGGEAANTLEFHWYAGEEEGLLGSQDIFQQYSQEGKEVVAMLNQDMTGYGETMGVITDNSDPNLTKFTKMILDTYTSAKYSDSECGYACSDHASANKAGFPSAFVYEAVVGQDNPAIHSPDDTIEKLDPAKMAEHAKLVVGFAYELAFATL.

The N-terminal stretch at 1–15 (MKVLAALALSALAMA) is a signal peptide. N-linked (GlcNAc...) asparagine glycosylation occurs at N76. Zn(2+)-binding residues include H167 and D185. The segment at 169-188 (DSINGKNPQGEAPGADDNGS) is disordered. N186 carries an N-linked (GlcNAc...) asparagine glycan. Zn(2+) is bound by residues E224 and D251. Residue N269 is glycosylated (N-linked (GlcNAc...) asparagine). A disulfide bridge connects residues C291 and C295. H324 serves as a coordination point for Zn(2+).

It belongs to the peptidase M28 family. M28E subfamily. As to quaternary structure, monomer. It depends on Zn(2+) as a cofactor.

It is found in the secreted. Functionally, probable extracellular aminopeptidase which contributes to pathogenicity. The polypeptide is Probable leucine aminopeptidase TRV_02148.1 (Trichophyton verrucosum (strain HKI 0517)).